A 652-amino-acid polypeptide reads, in one-letter code: tRNA-guanine(15) transglycosylase (652 aa).

D88 functions as the Nucleophile in the catalytic mechanism. D123 and A194 together coordinate substrate. C280, C282, and C285 together coordinate Zn(2+). A PUA domain is found at K577 to K652.

This sequence belongs to the archaeosine tRNA-ribosyltransferase family. Requires Zn(2+) as cofactor.

It carries out the reaction guanosine(15) in tRNA + 7-cyano-7-deazaguanine = 7-cyano-7-carbaguanosine(15) in tRNA + guanine. Its pathway is tRNA modification; archaeosine-tRNA biosynthesis. Exchanges the guanine residue with 7-cyano-7-deazaguanine (preQ0) at position 15 in the dihydrouridine loop (D-loop) of archaeal tRNAs. The chain is tRNA-guanine(15) transglycosylase from Methanococcus aeolicus (strain ATCC BAA-1280 / DSM 17508 / OCM 812 / Nankai-3).